Here is a 454-residue protein sequence, read N- to C-terminus: Bifunctional protein GlmU (454 aa).

The pyrophosphorylase stretch occupies residues 1–226 (MSTTVIILAA…AFEVEGVNDR (226 aa)). UDP-N-acetyl-alpha-D-glucosamine is bound by residues 8–11 (LAAG), Lys-22, Gln-73, 78–79 (GT), 100–102 (YGD), Gly-137, Glu-151, Asn-166, and Asn-224. Mg(2+) is bound at residue Asp-102. Asn-224 contacts Mg(2+). The segment at 227 to 247 (LQLAALEREFQKQQAKELMQQ) is linker. Residues 248–454 (GVTFADPARF…NYQRPQKLKK (207 aa)) are N-acetyltransferase. UDP-N-acetyl-alpha-D-glucosamine contacts are provided by Arg-330 and Lys-348. His-360 acts as the Proton acceptor in catalysis. UDP-N-acetyl-alpha-D-glucosamine-binding residues include Tyr-363 and Asn-374. Residues Ala-377, 383–384 (NY), Ser-402, Ala-420, and Arg-437 contribute to the acetyl-CoA site.

In the N-terminal section; belongs to the N-acetylglucosamine-1-phosphate uridyltransferase family. This sequence in the C-terminal section; belongs to the transferase hexapeptide repeat family. In terms of assembly, homotrimer. The cofactor is Mg(2+).

It localises to the cytoplasm. The catalysed reaction is alpha-D-glucosamine 1-phosphate + acetyl-CoA = N-acetyl-alpha-D-glucosamine 1-phosphate + CoA + H(+). It carries out the reaction N-acetyl-alpha-D-glucosamine 1-phosphate + UTP + H(+) = UDP-N-acetyl-alpha-D-glucosamine + diphosphate. It participates in nucleotide-sugar biosynthesis; UDP-N-acetyl-alpha-D-glucosamine biosynthesis; N-acetyl-alpha-D-glucosamine 1-phosphate from alpha-D-glucosamine 6-phosphate (route II): step 2/2. It functions in the pathway nucleotide-sugar biosynthesis; UDP-N-acetyl-alpha-D-glucosamine biosynthesis; UDP-N-acetyl-alpha-D-glucosamine from N-acetyl-alpha-D-glucosamine 1-phosphate: step 1/1. Its pathway is bacterial outer membrane biogenesis; LPS lipid A biosynthesis. Catalyzes the last two sequential reactions in the de novo biosynthetic pathway for UDP-N-acetylglucosamine (UDP-GlcNAc). The C-terminal domain catalyzes the transfer of acetyl group from acetyl coenzyme A to glucosamine-1-phosphate (GlcN-1-P) to produce N-acetylglucosamine-1-phosphate (GlcNAc-1-P), which is converted into UDP-GlcNAc by the transfer of uridine 5-monophosphate (from uridine 5-triphosphate), a reaction catalyzed by the N-terminal domain. The polypeptide is Bifunctional protein GlmU (Acinetobacter baumannii (strain ACICU)).